We begin with the raw amino-acid sequence, 283 residues long: Phosphatidylserine decarboxylase proenzyme (283 aa).

Active-site charge relay system; for autoendoproteolytic cleavage activity residues include aspartate 96, histidine 152, and serine 250. Serine 250 functions as the Schiff-base intermediate with substrate; via pyruvic acid; for decarboxylase activity in the catalytic mechanism. The residue at position 250 (serine 250) is a Pyruvic acid (Ser); by autocatalysis.

The protein belongs to the phosphatidylserine decarboxylase family. PSD-B subfamily. Prokaryotic type I sub-subfamily. In terms of assembly, heterodimer of a large membrane-associated beta subunit and a small pyruvoyl-containing alpha subunit. Pyruvate is required as a cofactor. Post-translationally, is synthesized initially as an inactive proenzyme. Formation of the active enzyme involves a self-maturation process in which the active site pyruvoyl group is generated from an internal serine residue via an autocatalytic post-translational modification. Two non-identical subunits are generated from the proenzyme in this reaction, and the pyruvate is formed at the N-terminus of the alpha chain, which is derived from the carboxyl end of the proenzyme. The autoendoproteolytic cleavage occurs by a canonical serine protease mechanism, in which the side chain hydroxyl group of the serine supplies its oxygen atom to form the C-terminus of the beta chain, while the remainder of the serine residue undergoes an oxidative deamination to produce ammonia and the pyruvoyl prosthetic group on the alpha chain. During this reaction, the Ser that is part of the protease active site of the proenzyme becomes the pyruvoyl prosthetic group, which constitutes an essential element of the active site of the mature decarboxylase.

It is found in the cell membrane. It catalyses the reaction a 1,2-diacyl-sn-glycero-3-phospho-L-serine + H(+) = a 1,2-diacyl-sn-glycero-3-phosphoethanolamine + CO2. It functions in the pathway phospholipid metabolism; phosphatidylethanolamine biosynthesis; phosphatidylethanolamine from CDP-diacylglycerol: step 2/2. Its function is as follows. Catalyzes the formation of phosphatidylethanolamine (PtdEtn) from phosphatidylserine (PtdSer). This is Phosphatidylserine decarboxylase proenzyme from Acinetobacter baumannii (strain ACICU).